Consider the following 379-residue polypeptide: Cystathionine gamma-lyase (379 aa).

Position 195 is an N6-(pyridoxal phosphate)lysine (K195).

The protein belongs to the trans-sulfuration enzymes family. It depends on pyridoxal 5'-phosphate as a cofactor.

The enzyme catalyses L,L-cystathionine + H2O = 2-oxobutanoate + L-cysteine + NH4(+). The catalysed reaction is L-homocysteine + H2O = 2-oxobutanoate + hydrogen sulfide + NH4(+) + H(+). Catalyzes the conversion of cystathionine to cysteine, and homocysteine to sulfide. In Bacillus subtilis (strain 168), this protein is Cystathionine gamma-lyase (mccB).